The following is a 544-amino-acid chain: Membrane protein insertase YidC (544 aa).

The tract at residues 29–58 is disordered; sequence TPKADPSATTQTLNPTSSESEDYVPTSSDS. Residues 35 to 46 are compositionally biased toward polar residues; sequence SATTQTLNPTSS. Transmembrane regions (helical) follow at residues 341–361, 421–441, and 499–519; these read FVLL…IIAI, GGCF…YVFL, and PVIF…YWLV.

This sequence belongs to the OXA1/ALB3/YidC family. Type 1 subfamily. In terms of assembly, interacts with the Sec translocase complex via SecD. Specifically interacts with transmembrane segments of nascent integral membrane proteins during membrane integration.

It is found in the cell inner membrane. Functionally, required for the insertion and/or proper folding and/or complex formation of integral membrane proteins into the membrane. Involved in integration of membrane proteins that insert both dependently and independently of the Sec translocase complex, as well as at least some lipoproteins. Aids folding of multispanning membrane proteins. The polypeptide is Membrane protein insertase YidC (Pseudoalteromonas translucida (strain TAC 125)).